The chain runs to 275 residues: 2,3,4,5-tetrahydropyridine-2,6-dicarboxylate N-succinyltransferase (275 aa).

It belongs to the transferase hexapeptide repeat family.

Its subcellular location is the cytoplasm. It carries out the reaction (S)-2,3,4,5-tetrahydrodipicolinate + succinyl-CoA + H2O = (S)-2-succinylamino-6-oxoheptanedioate + CoA. Its pathway is amino-acid biosynthesis; L-lysine biosynthesis via DAP pathway; LL-2,6-diaminopimelate from (S)-tetrahydrodipicolinate (succinylase route): step 1/3. This is 2,3,4,5-tetrahydropyridine-2,6-dicarboxylate N-succinyltransferase from Cupriavidus taiwanensis (strain DSM 17343 / BCRC 17206 / CCUG 44338 / CIP 107171 / LMG 19424 / R1) (Ralstonia taiwanensis (strain LMG 19424)).